We begin with the raw amino-acid sequence, 194 residues long: MADNVAGNDRLIWIDLEMTGLDTDRDSIIEIATIVTDAQLNVLAEGPELAIAHSLETLEAMDEWNRNQHRRSGLWQRVLDSQVTHAQAEAQTVAFLSEWIRAGASPMCGNSICQDRRFLHRQMSRLERYFHYRNLDVSTIKELARRWAPAVASGFAKSSAHTALSDVRDSIDELRHYRQFMGTLGGDNGGGVQN.

An Exonuclease domain is found at 11-174 (LIWIDLEMTG…SDVRDSIDEL (164 aa)). The active site involves Tyr132.

This sequence belongs to the oligoribonuclease family.

The protein resides in the cytoplasm. Its function is as follows. 3'-to-5' exoribonuclease specific for small oligoribonucleotides. The polypeptide is Oligoribonuclease (Xanthomonas campestris pv. campestris (strain ATCC 33913 / DSM 3586 / NCPPB 528 / LMG 568 / P 25)).